We begin with the raw amino-acid sequence, 2511 residues long: Fatty acid synthase (2511 aa).

At Met-1 the chain carries N-acetylmethionine. In terms of domain architecture, Ketosynthase family 3 (KS3) spans 1–406 (MEEVVIAGMS…GSNVHIILRP (406 aa)). Ser-63 bears the Phosphoserine mark. Lys-70 is subject to N6-acetyllysine. The For beta-ketoacyl synthase activity role is filled by Cys-161. Ser-207 carries the post-translational modification Phosphoserine. His-293 acts as the For beta-ketoacyl synthase activity in catalysis. Lys-298 is modified (N6-acetyllysine). The For beta-ketoacyl synthase activity role is filled by His-331. The acyl and malonyl transferases stretch occupies residues 429–817 (RTPEAVQKLL…IDANPNALFP (389 aa)). N6-acetyllysine occurs at positions 436 and 528. The active-site For malonyltransferase activity is Ser-581. Residues 647–648 (DT) and Phe-671 each bind an acyl-CoA. An N6-acetyllysine modification is found at Lys-673. Ser-725 bears the Phosphoserine mark. Residue Arg-773 participates in an acyl-CoA binding. Positions 838-966 (HSLAWDVPAA…KVYQWDDPDP (129 aa)) are N-terminal hotdog fold. A PKS/mFAS DH domain is found at 838 to 1108 (HSLAWDVPAA…TESAPRRQQE (271 aa)). The Proton acceptor; for dehydratase activity role is filled by His-878. Residues 981-1108 (EPLFLAQAEV…TESAPRRQQE (128 aa)) are C-terminal hotdog fold. Residue Lys-992 is modified to N6-acetyllysine. Asp-1031 acts as the Proton donor; for dehydratase activity in catalysis. Phosphoserine is present on residues Ser-1174 and Ser-1411. Cys-1471 is subject to S-nitrosocysteine. Phosphoserine occurs at positions 1584 and 1594. An enoyl reductase region spans residues 1635–1863 (DVPSNWTLEE…VQVLAEEPEA (229 aa)). Position 1671–1688 (1671–1688 (LLIHSGSGGVGQAAIAIA)) interacts with NADP(+). Lys-1704 is modified (N6-(pyridoxal phosphate)lysine; alternate). Lys-1704 is subject to N6-acetyllysine; alternate. N6-acetyllysine is present on residues Lys-1771 and Lys-1847. A beta-ketoacyl reductase region spans residues 1864–2118 (VLKGAKPKLM…FVLAEKAAAY (255 aa)). Residue 1886-1901 (SYIIAGGLGGFGLELA) participates in NADP(+) binding. Lys-1995 is modified (N6-acetyllysine). Position 2091 is an S-nitrosocysteine (Cys-2091). The Carrier domain occupies 2121–2198 (RDSQRDLVEA…ELSSKADEAS (78 aa)). Position 2156 is an O-(pantetheine 4'-phosphoryl)serine; alternate (Ser-2156). Ser-2156 is subject to Phosphoserine; alternate. At Ser-2198 the chain carries Phosphoserine. Residues Thr-2204 and Thr-2215 each carry the phosphothreonine modification. Positions 2207-2511 (EDGLAQQQTQ…AEPRVSVREG (305 aa)) are thioesterase. Ser-2236 bears the Phosphoserine mark. The active-site For thioesterase activity is Ser-2308. An N6-acetyllysine modification is found at Lys-2391. A Glycyl lysine isopeptide (Lys-Gly) (interchain with G-Cter in SUMO2) cross-link involves residue Lys-2449. Residue His-2481 is the For thioesterase activity of the active site.

Homodimer which is arranged in a head to tail fashion. Interacts with CEACAM1; this interaction is insulin and phosphorylation-dependent; reduces fatty-acid synthase activity. S-nitrosylation of Fatty acid synthase at cysteine residues Cys-1471 or Cys-2091 is important for the enzyme dimerization. In adipocytes, S-nitrosylation of Fatty acid synthase occurs under physiological conditions and gradually increases during adipogenesis. Ubiquitous. Prominent expression in brain, lung, liver and mammary gland.

Its subcellular location is the cytoplasm. It is found in the melanosome. The catalysed reaction is acetyl-CoA + n malonyl-CoA + 2n NADPH + 2n H(+) = a long-chain fatty acid + (n+1) CoA + n CO2 + 2n NADP(+).. It catalyses the reaction holo-[ACP] + acetyl-CoA = acetyl-[ACP] + CoA. It carries out the reaction holo-[ACP] + malonyl-CoA = malonyl-[ACP] + CoA. The enzyme catalyses a fatty acyl-[ACP] + malonyl-[ACP] + H(+) = a 3-oxoacyl-[ACP] + holo-[ACP] + CO2. The catalysed reaction is a (3R)-hydroxyacyl-[ACP] + NADP(+) = a 3-oxoacyl-[ACP] + NADPH + H(+). It catalyses the reaction a (3R)-hydroxyacyl-[ACP] = a (2E)-enoyl-[ACP] + H2O. It carries out the reaction a 2,3-saturated acyl-[ACP] + NADP(+) = a (2E)-enoyl-[ACP] + NADPH + H(+). The enzyme catalyses hexadecanoyl-[ACP] + H2O = hexadecanoate + holo-[ACP] + H(+). The catalysed reaction is acetyl-[ACP] + malonyl-[ACP] + H(+) = 3-oxobutanoyl-[ACP] + holo-[ACP] + CO2. It catalyses the reaction 3-oxobutanoyl-[ACP] + NADPH + H(+) = (3R)-hydroxybutanoyl-[ACP] + NADP(+). It carries out the reaction (3R)-hydroxybutanoyl-[ACP] = (2E)-butenoyl-[ACP] + H2O. The enzyme catalyses (2E)-butenoyl-[ACP] + NADPH + H(+) = butanoyl-[ACP] + NADP(+). The catalysed reaction is butanoyl-[ACP] + malonyl-[ACP] + H(+) = 3-oxohexanoyl-[ACP] + holo-[ACP] + CO2. It catalyses the reaction 3-oxohexanoyl-[ACP] + NADPH + H(+) = (3R)-hydroxyhexanoyl-[ACP] + NADP(+). It carries out the reaction (3R)-hydroxyhexanoyl-[ACP] = (2E)-hexenoyl-[ACP] + H2O. The enzyme catalyses (2E)-hexenoyl-[ACP] + NADPH + H(+) = hexanoyl-[ACP] + NADP(+). The catalysed reaction is hexanoyl-[ACP] + malonyl-[ACP] + H(+) = 3-oxooctanoyl-[ACP] + holo-[ACP] + CO2. It catalyses the reaction 3-oxooctanoyl-[ACP] + NADPH + H(+) = (3R)-hydroxyoctanoyl-[ACP] + NADP(+). It carries out the reaction (3R)-hydroxyoctanoyl-[ACP] = (2E)-octenoyl-[ACP] + H2O. The enzyme catalyses (2E)-octenoyl-[ACP] + NADPH + H(+) = octanoyl-[ACP] + NADP(+). The catalysed reaction is octanoyl-[ACP] + malonyl-[ACP] + H(+) = 3-oxodecanoyl-[ACP] + holo-[ACP] + CO2. It catalyses the reaction 3-oxodecanoyl-[ACP] + NADPH + H(+) = (3R)-hydroxydecanoyl-[ACP] + NADP(+). It carries out the reaction (3R)-hydroxydecanoyl-[ACP] = (2E)-decenoyl-[ACP] + H2O. The enzyme catalyses (2E)-decenoyl-[ACP] + NADPH + H(+) = decanoyl-[ACP] + NADP(+). The catalysed reaction is decanoyl-[ACP] + malonyl-[ACP] + H(+) = 3-oxododecanoyl-[ACP] + holo-[ACP] + CO2. It catalyses the reaction 3-oxododecanoyl-[ACP] + NADPH + H(+) = (3R)-hydroxydodecanoyl-[ACP] + NADP(+). It carries out the reaction (3R)-hydroxydodecanoyl-[ACP] = (2E)-dodecenoyl-[ACP] + H2O. The enzyme catalyses (2E)-dodecenoyl-[ACP] + NADPH + H(+) = dodecanoyl-[ACP] + NADP(+). The catalysed reaction is dodecanoyl-[ACP] + malonyl-[ACP] + H(+) = 3-oxotetradecanoyl-[ACP] + holo-[ACP] + CO2. It catalyses the reaction 3-oxotetradecanoyl-[ACP] + NADPH + H(+) = (3R)-hydroxytetradecanoyl-[ACP] + NADP(+). It carries out the reaction (3R)-hydroxytetradecanoyl-[ACP] = (2E)-tetradecenoyl-[ACP] + H2O. The enzyme catalyses (2E)-tetradecenoyl-[ACP] + NADPH + H(+) = tetradecanoyl-[ACP] + NADP(+). The catalysed reaction is tetradecanoyl-[ACP] + malonyl-[ACP] + H(+) = 3-oxohexadecanoyl-[ACP] + holo-[ACP] + CO2. It catalyses the reaction 3-oxohexadecanoyl-[ACP] + NADPH + H(+) = (3R)-hydroxyhexadecanoyl-[ACP] + NADP(+). It carries out the reaction (3R)-hydroxyhexadecanoyl-[ACP] = (2E)-hexadecenoyl-[ACP] + H2O. The enzyme catalyses (2E)-hexadecenoyl-[ACP] + NADPH + H(+) = hexadecanoyl-[ACP] + NADP(+). The catalysed reaction is hexadecanoyl-[ACP] + malonyl-[ACP] + H(+) = 3-oxooctadecanoyl-[ACP] + holo-[ACP] + CO2. It catalyses the reaction 3-oxooctadecanoyl-[ACP] + NADPH + H(+) = (3R)-hydroxyoctadecanoyl-[ACP] + NADP(+). It carries out the reaction (3R)-hydroxyoctadecanoyl-[ACP] = (2E)-octadecenoyl-[ACP] + H2O. The enzyme catalyses (2E)-octadecenoyl-[ACP] + NADPH + H(+) = octadecanoyl-[ACP] + NADP(+). The catalysed reaction is tetradecanoyl-[ACP] + H2O = tetradecanoate + holo-[ACP] + H(+). It catalyses the reaction octadecanoyl-[ACP] + H2O = octadecanoate + holo-[ACP] + H(+). The protein operates within lipid metabolism; fatty acid biosynthesis. Activated by S-nitrosylation which promotes enzyme dimerization. Cerulenin, a potent non-competitive pharmacological inhibitor of FAS, binds covalently to the active site of the condensing enzyme region, inactivating a key enzyme step in fatty acid synthesis. Its function is as follows. Fatty acid synthetase is a multifunctional enzyme that catalyzes the de novo biosynthesis of long-chain saturated fatty acids starting from acetyl-CoA and malonyl-CoA in the presence of NADPH. This multifunctional protein contains 7 catalytic activities and a site for the binding of the prosthetic group 4'-phosphopantetheine of the acyl carrier protein ([ACP]) domain. In terms of biological role, (Microbial infection) Fatty acid synthetase activity is required for SARS coronavirus-2/SARS-CoV-2 replication. This is Fatty acid synthase (FASN) from Homo sapiens (Human).